Reading from the N-terminus, the 64-residue chain is Beta-toxin Tf1 (64 aa).

The region spanning 1–62 (KEGYLMDHEG…VWERATNRCG (62 aa)) is the LCN-type CS-alpha/beta domain. 4 disulfides stabilise this stretch: C11/C61, C15/C37, C23/C42, and C27/C44. C61 is subject to Cysteine amide.

It belongs to the long (4 C-C) scorpion toxin superfamily. Sodium channel inhibitor family. Beta subfamily. In terms of tissue distribution, expressed by the venom gland.

It is found in the secreted. Beta toxins bind voltage-independently at site-4 of sodium channels (Nav) and shift the voltage of activation toward more negative potentials thereby affecting sodium channel activation and promoting spontaneous and repetitive firing. This Tityus fasciolatus (Central Brazilian scorpion) protein is Beta-toxin Tf1.